Here is a 361-residue protein sequence, read N- to C-terminus: Caffeic acid 3-O-methyltransferase 2 (361 aa).

Position 128-134 (128-134 (MNQDKVL)) interacts with substrate. Positions 160–178 (AFEYHGTDPRFNKVFNQGM) are substrate binding. Residues Gly206, Asp229, Asp249, Met250, and Lys263 each contribute to the S-adenosyl-L-methionine site. The Proton acceptor role is filled by His267.

It belongs to the class I-like SAM-binding methyltransferase superfamily. Cation-independent O-methyltransferase family. COMT subfamily. In terms of assembly, homodimer.

It catalyses the reaction (E)-caffeate + S-adenosyl-L-methionine = (E)-ferulate + S-adenosyl-L-homocysteine + H(+). It participates in aromatic compound metabolism; phenylpropanoid biosynthesis. Functionally, catalyzes the conversion of caffeic acid to ferulic acid and of 5-hydroxyferulic acid to sinapic acid. The resulting products may subsequently be converted to the corresponding alcohols that are incorporated into lignins. The polypeptide is Caffeic acid 3-O-methyltransferase 2 (COMT2) (Ocimum basilicum (Sweet basil)).